We begin with the raw amino-acid sequence, 117 residues long: MSHTKNLKLILQSKKLSELPTHRKSINMTIPVRALRCPIWLWPTYDAQTIPWKKKKKSEQHELWASVYNRTIGKLQLNKLTFIDLCDCFLNPTLLSNLFAAFSGYYPIEVTIMSRKV.

This is an uncharacterized protein from Schizosaccharomyces pombe (strain 972 / ATCC 24843) (Fission yeast).